The following is a 172-amino-acid chain: Signal peptidase complex catalytic subunit sec11 (172 aa).

The Cytoplasmic portion of the chain corresponds to 1–14; sequence MLSGLANPRQAAVQ. Residues 15 to 35 form a helical; Signal-anchor for type II membrane protein membrane-spanning segment; it reads LMNFGLILSTAFMMWKGISVI. The Lumenal segment spans residues 36–172; the sequence is TDSPSPIVVV…MGLVVVLQRE (137 aa). Residues Ser49 and His90 each act as charge relay system in the active site. A glycan (N-linked (GlcNAc...) asparagine) is linked at Asn111. The Charge relay system role is filled by Asp115. The tract at residues 158–169 is C-terminal short (CTS) helix; sequence VMLGLMGLVVVL.

This sequence belongs to the peptidase S26B family. Component of the signal peptidase complex (SPC) composed of a catalytic subunit SEC11 and three accessory subunits SPC1, SPC2 and SPC3. The complex induces a local thinning of the ER membrane which is used to measure the length of the signal peptide (SP) h-region of protein substrates. This ensures the selectivity of the complex towards h-regions shorter than 18-20 amino acids. SPC associates with the translocon complex.

It localises to the endoplasmic reticulum membrane. The enzyme catalyses Cleavage of hydrophobic, N-terminal signal or leader sequences from secreted and periplasmic proteins.. Its function is as follows. Catalytic component of the signal peptidase complex (SPC) which catalyzes the cleavage of N-terminal signal sequences from nascent proteins as they are translocated into the lumen of the endoplasmic reticulum. Specifically cleaves N-terminal signal peptides that contain a hydrophobic alpha-helix (h-region) shorter than 18-20 amino acids. The sequence is that of Signal peptidase complex catalytic subunit sec11 (sec11) from Neurospora crassa (strain ATCC 24698 / 74-OR23-1A / CBS 708.71 / DSM 1257 / FGSC 987).